Consider the following 336-residue polypeptide: Growth hormone-regulated TBC protein 1 (336 aa).

The region spanning 68–258 (GVPLEHRARV…RIWDCLFNEG (191 aa)) is the Rab-GAP TBC domain.

Its function is as follows. May act as a GTPase-activating protein for Rab family protein(s). This chain is Growth hormone-regulated TBC protein 1 (GRTP1), found in Homo sapiens (Human).